A 465-amino-acid chain; its full sequence is FeMo cofactor biosynthesis protein FixZ (465 aa).

The tract at residues 1-36 (MSEPEIKVGKTSSALFDRAPMAPSMPGGRASSSHGL) is disordered. Residues 61–312 (HHYFARMHXX…MRHCQQCRAD (252 aa)) enclose the Radical SAM core domain. [4Fe-4S] cluster is bound by residues Cys75 and Cys79. Tyr81 is an S-adenosyl-L-methionine binding site. Cys82 lines the [4Fe-4S] cluster pocket. The S-adenosyl-L-methionine site is built by Gly129, Thr181, and Ile233. [4Fe-4S] cluster contacts are provided by Cys306 and Cys309.

This sequence belongs to the radical SAM superfamily. NifB family. Requires [4Fe-4S] cluster as cofactor.

The protein operates within cofactor biosynthesis; Fe-Mo cofactor biosynthesis. Functionally, involved in the biosynthesis of the iron-molybdenum cofactor (FeMo-co or M-cluster) found in the dinitrogenase enzyme of the nitrogenase complex in nitrogen-fixing microorganisms. Catalyzes the crucial step of radical SAM-dependent carbide insertion that occurs concomitant with the insertion of a 9th sulfur and the rearrangement/coupling of two [4Fe-4S] clusters into a [8Fe-9S-C] cluster, the precursor to the M-cluster. The polypeptide is FeMo cofactor biosynthesis protein FixZ (fixZ) (Rhizobium leguminosarum).